We begin with the raw amino-acid sequence, 1406 residues long: EF-hand calcium-binding domain-containing protein 5 (1406 aa).

The interval 255–655 (NKDLPQQQRD…KACEPKPQHV (401 aa)) is disordered. 8 stretches are compositionally biased toward polar residues: residues 258–294 (LPQQ…SLTG), 322–334 (RRSS…QQRG), 342–354 (RRSS…QQRG), 362–373 (RRSSTVEQTRQR), 382–393 (RRSSTVEQTQRR), 402–414 (RRSS…QQRG), 422–434 (RRSS…QQRG), and 442–464 (RRSS…SLPE). The span at 465 to 477 (QESHRGSITEGSH) shows a compositional bias: basic and acidic residues. The span at 501 to 513 (DDSGSAGSRRGSG) shows a compositional bias: low complexity. Positions 564–577 (QELDEDSTPQLEDD) are enriched in acidic residues. Basic and acidic residues-rich tracts occupy residues 578–598 (SALK…EEKP) and 638–655 (SKRD…PQHV). The 36-residue stretch at 773-808 (RRRILLQAIFEKWDNDGSGFLDLNEVDDLLYTYKEG) folds into the EF-hand domain. Residues aspartate 786, aspartate 788, serine 790, and glutamate 797 each contribute to the Ca(2+) site.

This is EF-hand calcium-binding domain-containing protein 5 (Efcab5) from Mus musculus (Mouse).